Consider the following 428-residue polypeptide: Phosphoribosylamine--glycine ligase (428 aa).

Residues 109-316 (KDFLHRHGIP…LVELCLAALD (208 aa)) form the ATP-grasp domain. 135–196 (LRQVGAPVVV…EEFLTGEEAS (62 aa)) contacts ATP. Residues 211 to 235 (SSQDHKARDDGDRGPNTGGMGAYSP) form a disordered region. Residues 213-223 (QDHKARDDGDR) show a composition bias toward basic and acidic residues. Mg(2+) contacts are provided by Glu-286 and Asn-288.

Belongs to the GARS family. Requires Mg(2+) as cofactor. Mn(2+) serves as cofactor.

It catalyses the reaction 5-phospho-beta-D-ribosylamine + glycine + ATP = N(1)-(5-phospho-beta-D-ribosyl)glycinamide + ADP + phosphate + H(+). It functions in the pathway purine metabolism; IMP biosynthesis via de novo pathway; N(1)-(5-phospho-D-ribosyl)glycinamide from 5-phospho-alpha-D-ribose 1-diphosphate: step 2/2. The polypeptide is Phosphoribosylamine--glycine ligase (purD) (Allochromatium vinosum (strain ATCC 17899 / DSM 180 / NBRC 103801 / NCIMB 10441 / D) (Chromatium vinosum)).